The primary structure comprises 134 residues: Small ribosomal subunit protein uS9 (134 aa).

The tract at residues 114 to 134 (QKEAKNFGGPGARSKYQKSYR) is disordered.

It belongs to the universal ribosomal protein uS9 family.

The polypeptide is Small ribosomal subunit protein uS9 (Methanosarcina mazei (strain ATCC BAA-159 / DSM 3647 / Goe1 / Go1 / JCM 11833 / OCM 88) (Methanosarcina frisia)).